The primary structure comprises 782 residues: General transcription and DNA repair factor IIH helicase/translocase subunit XPB (782 aa).

Basic and acidic residues predominate over residues 1-11; sequence MGKRDRADREK. Positions 1–51 are disordered; that stretch reads MGKRDRADREKKKSKKRHYEDEEDEEDDAPGNDTQEAVPSAAGKQVDESGT. The Nuclear localization signal motif lies at 6-18; sequence RADREKKKSKKRH. Acidic residues predominate over residues 21 to 30; that stretch reads DEEDEEDDAP. Positions 327–488 constitute a Helicase ATP-binding domain; it reads MFGNGRARSG…DLNFLIGPKL (162 aa). 340 to 347 contributes to the ATP binding site; the sequence is LPCGAGKS. The short motif at 441-444 is the DEVH box element; that stretch reads DEVH. One can recognise a Helicase C-terminal domain in the interval 542–702; the sequence is RACQFLIKFH…LAGMEEEDLA (161 aa). The residue at position 686 (Ser686) is a Phosphoserine. Position 751 is a phosphoserine; by CK2 (Ser751).

The protein belongs to the helicase family. RAD25/XPB subfamily. In terms of assembly, component of the 7-subunit TFIIH core complex composed of XPB/ERCC3, XPD/ERCC2, GTF2H1, GTF2H2, GTF2H3, GTF2H4 and GTF2H5, which is active in NER. The core complex associates with the 3-subunit CDK-activating kinase (CAK) module composed of CCNH/cyclin H, CDK7 and MNAT1 to form the 10-subunit holoenzyme (holo-TFIIH) active in transcription. Interacts with PUF60. Interacts with ATF7IP. Interacts with KAT2A; leading to KAT2A recruitment to promoters and acetylation of histones. Part of TBP-based Pol II pre-initiation complex (PIC), in which Pol II core assembles with general transcription factors and other specific initiation factors including GTF2E1, GTF2E2, GTF2F1, GTF2F2, TCEA1, ERCC2, ERCC3, GTF2H2, GTF2H3, GTF2H4, GTF2H5, GTF2A1, GTF2A2, GTF2B and TBP; this large multi-subunit PIC complex mediates DNA unwinding and targets Pol II core to the transcription start site where the first phosphodiester bond forms. Post-translationally, phosphorylation on Ser-751 by CK2 controls the 5'-excision activity of ERCC1-XPF endonuclease; phosphorylated protein inhibits the excision activity and thus NER. Dephosphorylation reactivates the 5'-excision step. Phosphorylation has no effect on transcription or the 3'-5' helicase activity.

Its subcellular location is the nucleus. The enzyme catalyses Couples ATP hydrolysis with the unwinding of duplex DNA by translocating in the 3'-5' direction.. The catalysed reaction is ATP + H2O = ADP + phosphate + H(+). With respect to regulation, phosphorylation on Ser-751 by CK2 controls the 5'-excision activity of ERCC1-XPF endonuclease; phosphorylated protein inhibits the excision activity and thus NER. ATPase activity is stimulated by TFIIH subunit p52 (GTF2H4). DNA translocase activity by this subunit in TFIIH is stimulated by XPA, ERCC5/XPG and XFP plus ERCC1. Its function is as follows. ATP-dependent 3'-5' DNA helicase/translocase; binds dsDNA rather than ssDNA, unzipping it in a translocase rather than classical helicase activity. Component of the general transcription and DNA repair factor IIH (TFIIH) core complex. When complexed to CDK-activating kinase (CAK), involved in RNA transcription by RNA polymerase II. The ATPase activity of XPB/ERCC3, but not its helicase activity, is required for DNA opening; it may wrap around the damaged DNA wedging it open, causing localized melting and twisting that allows XPD/ERCC2 helicase to anchor. The ATP-dependent helicase activity of XPB/ERCC3 may be required for promoter escape. Also involved in transcription-coupled nucleotide excision repair (NER) of damaged DNA. In NER, TFIIH acts by opening DNA around the lesion to allow the excision of the damaged oligonucleotide and its replacement by a new DNA fragment. The structure of the TFIIH transcription complex differs from the NER-TFIIH complex; large movements by XPD/ERCC2 and XPB/ERCC3 are stabilized by XPA. The polypeptide is General transcription and DNA repair factor IIH helicase/translocase subunit XPB (ERCC3) (Bos taurus (Bovine)).